The sequence spans 295 residues: Diaminopimelate epimerase (295 aa).

Asn-11 and Asn-67 together coordinate substrate. Cys-76 functions as the Proton donor in the catalytic mechanism. Substrate-binding positions include 77–78 (GN), Asn-171, Asn-210, and 228–229 (ER). Cys-237 (proton acceptor) is an active-site residue. Residue 238 to 239 (GT) participates in substrate binding.

The protein belongs to the diaminopimelate epimerase family. Homodimer.

It is found in the cytoplasm. The enzyme catalyses (2S,6S)-2,6-diaminopimelate = meso-2,6-diaminopimelate. Its pathway is amino-acid biosynthesis; L-lysine biosynthesis via DAP pathway; DL-2,6-diaminopimelate from LL-2,6-diaminopimelate: step 1/1. Catalyzes the stereoinversion of LL-2,6-diaminopimelate (L,L-DAP) to meso-diaminopimelate (meso-DAP), a precursor of L-lysine. The sequence is that of Diaminopimelate epimerase from Methanocaldococcus jannaschii (strain ATCC 43067 / DSM 2661 / JAL-1 / JCM 10045 / NBRC 100440) (Methanococcus jannaschii).